The primary structure comprises 355 residues: Small ribosomal subunit biogenesis GTPase RsgA 1 (355 aa).

A CP-type G domain is found at 103-262 (GRVADRQAIA…LIDTPGVREF (160 aa)). GTP-binding positions include 152-155 (NKAD) and 204-212 (GSSGVGKSS). Zn(2+) is bound by residues Cys-285, Cys-290, His-292, and Cys-298.

Belongs to the TRAFAC class YlqF/YawG GTPase family. RsgA subfamily. Monomer. Associates with 30S ribosomal subunit, binds 16S rRNA. Zn(2+) serves as cofactor.

The protein localises to the cytoplasm. One of several proteins that assist in the late maturation steps of the functional core of the 30S ribosomal subunit. Helps release RbfA from mature subunits. May play a role in the assembly of ribosomal proteins into the subunit. Circularly permuted GTPase that catalyzes slow GTP hydrolysis, GTPase activity is stimulated by the 30S ribosomal subunit. In Bacteroides thetaiotaomicron (strain ATCC 29148 / DSM 2079 / JCM 5827 / CCUG 10774 / NCTC 10582 / VPI-5482 / E50), this protein is Small ribosomal subunit biogenesis GTPase RsgA 1.